The following is a 293-amino-acid chain: Protein YIF1A (293 aa).

Residues 1–27 (MAYHSAYGVHGSKHRTRAAPDPPPLFD) form a disordered region. Ala2 is modified (N-acetylalanine). The Cytoplasmic portion of the chain corresponds to 2–138 (AYHSAYGVHG…PPRKDLNAPD (137 aa)). Position 12 is a phosphoserine (Ser12). The chain crosses the membrane as a helical span at residues 139 to 159 (LYIPTMAFITYVLLAGMALGI). At 160–174 (QQRFSPEVLGLCAST) the chain is on the lumenal side. The chain crosses the membrane as a helical span at residues 175-195 (ALVWVFMEVLALLLGLYLATV). Topologically, residues 196–203 (RSELSTFH) are cytoplasmic. Residues 204-226 (LLAYSGYKYVGMILSVLTGLLFG) traverse the membrane as a helical segment. At 227 to 229 (SDG) the chain is on the lumenal side. A helical membrane pass occupies residues 230 to 249 (YYVALAWTSSALMYFIVRSL). Topologically, residues 250–271 (RTAASGPDSMGGPAPRQRLQLY) are cytoplasmic. A helical transmembrane segment spans residues 272-292 (LTLGAAAFQPLIIYWLTFHLV).

This sequence belongs to the YIF1 family. Interacts with YIPF5.

The protein resides in the endoplasmic reticulum membrane. It is found in the golgi apparatus membrane. The protein localises to the endoplasmic reticulum-Golgi intermediate compartment membrane. Functionally, possible role in transport between endoplasmic reticulum and Golgi. The polypeptide is Protein YIF1A (Yif1a) (Mus musculus (Mouse)).